The sequence spans 265 residues: Expansin-like A1 (265 aa).

A signal peptide spans 1-20; the sequence is MGSFLFLIVVIFLFSSSVNA. In terms of domain architecture, Expansin-like EG45 spans 41 to 147; it reads SGACAYGSMA…QRVPCDYGNK (107 aa). The chain crosses the membrane as a helical span at residues 42-62; the sequence is GACAYGSMATSFFAGHIAAAI. Residues N99 and N102 are each glycosylated (N-linked (GlcNAc...) asparagine). Residues 161–244 form the Expansin-like CBD domain; sequence NYLEIKLLYQ…NWEAGKIYDA (84 aa).

It belongs to the expansin family. Expansin-like A subfamily.

It is found in the membrane. This Arabidopsis thaliana (Mouse-ear cress) protein is Expansin-like A1 (EXLA1).